The following is a 414-amino-acid chain: Phthiocerol/phthiodiolone dimycocerosyl transferase (414 aa).

The active-site Proton acceptor is histidine 118.

The protein belongs to the acyltransferase PapA5 family. In terms of assembly, monomer. Interacts directly with the acyl carrier protein (ACP) domain of the mycocerosic acid synthase (mas) protein.

The enzyme catalyses 2 a mycocerosyl-[mycocerosic acid synthase] + a phthiocerol = a dimycocerosyl phthiocerol + 2 holo-[mycocerosic acid synthase].. It catalyses the reaction 2 a mycocerosyl-[mycocerosic acid synthase] + a phthiodiolone = a dimycocerosyl phthiodiolone + 2 holo-[mycocerosic acid synthase].. It carries out the reaction 2 a mycocerosyl-[mycocerosic acid synthase] + a phenolphthiocerol = a dimycocerosyl phenolphthiocerol + 2 holo-[mycocerosic acid synthase].. Functionally, catalyzes diesterification of phthiocerol, phthiodiolone, and phenolphthiocerol with mycocerosic acids, the final step in the phthiocerol, phthiodiolone and phenolphthiocerol dimycocerosate esters (PDIM) synthesis. Can directly transfer the mycocerosate bound to the mycocerosic acid synthase (mas) onto the substrate alcohols. In Mycobacterium ulcerans (strain Agy99), this protein is Phthiocerol/phthiodiolone dimycocerosyl transferase (papA5).